The primary structure comprises 227 residues: UPF0173 metal-dependent hydrolase Bcer98_3294 (227 aa).

This sequence belongs to the UPF0173 family.

In Bacillus cytotoxicus (strain DSM 22905 / CIP 110041 / 391-98 / NVH 391-98), this protein is UPF0173 metal-dependent hydrolase Bcer98_3294.